The primary structure comprises 49 residues: Large ribosomal subunit protein bL33B (49 aa).

It belongs to the bacterial ribosomal protein bL33 family.

The protein is Large ribosomal subunit protein bL33B of Geobacillus kaustophilus (strain HTA426).